Here is a 295-residue protein sequence, read N- to C-terminus: Pyridoxal 5'-phosphate synthase subunit PdxS (295 aa).

Aspartate 23 lines the D-ribose 5-phosphate pocket. Lysine 80 (schiff-base intermediate with D-ribose 5-phosphate) is an active-site residue. Glycine 152 contacts D-ribose 5-phosphate. Residue arginine 164 participates in D-glyceraldehyde 3-phosphate binding. D-ribose 5-phosphate is bound by residues glycine 213 and 234–235 (GS).

It belongs to the PdxS/SNZ family. In terms of assembly, in the presence of PdxT, forms a dodecamer of heterodimers.

It carries out the reaction aldehydo-D-ribose 5-phosphate + D-glyceraldehyde 3-phosphate + L-glutamine = pyridoxal 5'-phosphate + L-glutamate + phosphate + 3 H2O + H(+). It functions in the pathway cofactor biosynthesis; pyridoxal 5'-phosphate biosynthesis. In terms of biological role, catalyzes the formation of pyridoxal 5'-phosphate from ribose 5-phosphate (RBP), glyceraldehyde 3-phosphate (G3P) and ammonia. The ammonia is provided by the PdxT subunit. Can also use ribulose 5-phosphate and dihydroxyacetone phosphate as substrates, resulting from enzyme-catalyzed isomerization of RBP and G3P, respectively. This chain is Pyridoxal 5'-phosphate synthase subunit PdxS, found in Methanosphaera stadtmanae (strain ATCC 43021 / DSM 3091 / JCM 11832 / MCB-3).